The primary structure comprises 105 residues: Thioredoxin (105 aa).

A Thioredoxin domain is found at 1 to 105 (MANNVTDSSF…SLLDWINKSI (105 aa)). The cysteines at positions 30 and 33 are disulfide-linked.

The protein belongs to the thioredoxin family.

Its function is as follows. Component of the thioredoxin-thioredoxin reductase system. Participates in various redox reactions through the reversible oxidation of its active center dithiol to a disulfide and catalyzes dithiol-disulfide exchange reactions. The polypeptide is Thioredoxin (trxA) (Rickettsia felis (strain ATCC VR-1525 / URRWXCal2) (Rickettsia azadi)).